An 82-amino-acid polypeptide reads, in one-letter code: Sec-independent protein translocase protein TatA (82 aa).

Residues Met-1–Gly-21 form a helical membrane-spanning segment. The segment at Ala-42–Thr-82 is disordered. Residues Ser-63 to Thr-82 are compositionally biased toward basic and acidic residues.

It belongs to the TatA/E family. As to quaternary structure, the Tat system comprises two distinct complexes: a TatABC complex, containing multiple copies of TatA, TatB and TatC subunits, and a separate TatA complex, containing only TatA subunits. Substrates initially bind to the TatABC complex, which probably triggers association of the separate TatA complex to form the active translocon.

The protein resides in the cell inner membrane. Part of the twin-arginine translocation (Tat) system that transports large folded proteins containing a characteristic twin-arginine motif in their signal peptide across membranes. TatA could form the protein-conducting channel of the Tat system. This is Sec-independent protein translocase protein TatA from Helicobacter hepaticus (strain ATCC 51449 / 3B1).